A 315-amino-acid polypeptide reads, in one-letter code: Ribosomal RNA small subunit methyltransferase H (315 aa).

S-adenosyl-L-methionine contacts are provided by residues 35–37, aspartate 55, phenylalanine 84, aspartate 105, and glutamine 112; that span reads AGH.

Belongs to the methyltransferase superfamily. RsmH family.

The protein localises to the cytoplasm. It carries out the reaction cytidine(1402) in 16S rRNA + S-adenosyl-L-methionine = N(4)-methylcytidine(1402) in 16S rRNA + S-adenosyl-L-homocysteine + H(+). In terms of biological role, specifically methylates the N4 position of cytidine in position 1402 (C1402) of 16S rRNA. This is Ribosomal RNA small subunit methyltransferase H from Streptococcus agalactiae serotype III (strain NEM316).